The sequence spans 136 residues: Protein PsiE homolog (136 aa).

4 consecutive transmembrane segments (helical) span residues Ile-15 to Leu-35, Tyr-55 to Val-75, Phe-82 to Ile-102, and Pro-108 to Cys-128.

The protein belongs to the PsiE family.

Its subcellular location is the cell inner membrane. The sequence is that of Protein PsiE homolog from Enterobacter sp. (strain 638).